The primary structure comprises 176 residues: NADH-quinone oxidoreductase subunit I 2 (176 aa).

4Fe-4S ferredoxin-type domains lie at 45–77 (IVLT…MEAA) and 87–116 (RWFR…MTPD). [4Fe-4S] cluster contacts are provided by Cys-57, Cys-60, Cys-63, Cys-67, Cys-96, Cys-99, Cys-102, and Cys-106.

It belongs to the complex I 23 kDa subunit family. In terms of assembly, NDH-1 is composed of 14 different subunits. Subunits NuoA, H, J, K, L, M, N constitute the membrane sector of the complex. It depends on [4Fe-4S] cluster as a cofactor.

Its subcellular location is the cell inner membrane. The enzyme catalyses a quinone + NADH + 5 H(+)(in) = a quinol + NAD(+) + 4 H(+)(out). Its function is as follows. NDH-1 shuttles electrons from NADH, via FMN and iron-sulfur (Fe-S) centers, to quinones in the respiratory chain. The immediate electron acceptor for the enzyme in this species is believed to be ubiquinone. Couples the redox reaction to proton translocation (for every two electrons transferred, four hydrogen ions are translocated across the cytoplasmic membrane), and thus conserves the redox energy in a proton gradient. In Geobacter sulfurreducens (strain ATCC 51573 / DSM 12127 / PCA), this protein is NADH-quinone oxidoreductase subunit I 2.